A 480-amino-acid polypeptide reads, in one-letter code: ATP-grasp enzyme ankG (480 aa).

The segment at 1–30 is disordered; the sequence is MYQISLKATKSAAEPTSSTDASHDDRQVER. Positions 21-30 are enriched in basic and acidic residues; sequence ASHDDRQVER.

It catalyses the reaction NK13650 D + L-aspartate + ATP = NK13650 C + AMP + diphosphate + H(+). It carries out the reaction NK13650 B + L-aspartate + ATP = NK13650 A + AMP + diphosphate + H(+). The protein operates within secondary metabolite biosynthesis. Its function is as follows. ATP-grasp enzyme; part of the ank cluster that mediates the biosynthesis of NK13650 C, a highly modified cyclo-arginine-tyrosine dipeptide. AnkG catalyzes the last step of the pathway via amidation NK13650 D with L-Asp to produce NK13650 C. AnkG also amidates NK13650 B into NK13650 A. Within the pathway, the cyclodipeptide synthase ankA acts as the scaffold-generating enzyme and is responsible for formation of the cyclo-Arg-Tyr diketopiperazine (cRY) from L-Arg and L-Tyr. The ankA product cRY is desaturated by the cytochrome P450 monooxygenase ankB to yield a dehydro-cyclodipeptide intermediate. The FAD-dependent monooxygenase ankC then installs the m-OH, ankD catalyzes the attachment of L-homoserine, and ankE ligates citrate to the ankD product to yield NK13650 B. The O-methyltransferase ankF is responsible for methylation of the C-17 phenol group of NK13650 B to produce NK13650 D. Amidation of NK13650 D with L-Asp by ankG then leads to the production of NK13650 C, whereas amidation of NK13650 B produces NK13650 A. The chain is ATP-grasp enzyme ankG from Aspergillus thermomutatus (Neosartorya pseudofischeri).